A 439-amino-acid chain; its full sequence is 5-methylthioadenosine/S-adenosylhomocysteine deaminase (439 aa).

Zn(2+)-binding residues include histidine 70 and histidine 72. Substrate-binding residues include glutamate 99 and histidine 192. Histidine 219 is a Zn(2+) binding site. 2 residues coordinate substrate: glutamate 222 and aspartate 307. Aspartate 307 is a binding site for Zn(2+).

This sequence belongs to the metallo-dependent hydrolases superfamily. MTA/SAH deaminase family. It depends on Zn(2+) as a cofactor.

It carries out the reaction S-adenosyl-L-homocysteine + H2O + H(+) = S-inosyl-L-homocysteine + NH4(+). The catalysed reaction is S-methyl-5'-thioadenosine + H2O + H(+) = S-methyl-5'-thioinosine + NH4(+). Functionally, catalyzes the deamination of 5-methylthioadenosine and S-adenosyl-L-homocysteine into 5-methylthioinosine and S-inosyl-L-homocysteine, respectively. Is also able to deaminate adenosine. This chain is 5-methylthioadenosine/S-adenosylhomocysteine deaminase, found in Thermodesulfovibrio yellowstonii (strain ATCC 51303 / DSM 11347 / YP87).